Reading from the N-terminus, the 105-residue chain is MSIRPLYDKVVVKRIEAQRTTASGIVIPDTASEKPEQGEVIATGNGRRLQDGTQVPLEVKVGDQVLFGKYAGQTVKLHGEELLVLREEDILGVVEASDAKLKKVA.

The protein belongs to the GroES chaperonin family. In terms of assembly, heptamer of 7 subunits arranged in a ring. Interacts with the chaperonin GroEL.

Its subcellular location is the cytoplasm. Functionally, together with the chaperonin GroEL, plays an essential role in assisting protein folding. The GroEL-GroES system forms a nano-cage that allows encapsulation of the non-native substrate proteins and provides a physical environment optimized to promote and accelerate protein folding. GroES binds to the apical surface of the GroEL ring, thereby capping the opening of the GroEL channel. The chain is Co-chaperonin GroES from Methylovorus sp. (strain SS1 / DSM 11726).